A 269-amino-acid chain; its full sequence is Mediator of RNA polymerase II transcription subunit 8 (269 aa).

The tract at residues Arg187–Arg217 is disordered. Residues Glu190 to Glu211 show a composition bias toward acidic residues.

The protein belongs to the Mediator complex subunit 8 family. Component of the Mediator complex.

The protein resides in the nucleus. In terms of biological role, component of the Mediator complex, a coactivator involved in the regulated transcription of nearly all RNA polymerase II-dependent genes. Mediator functions as a bridge to convey information from gene-specific regulatory proteins to the basal RNA polymerase II transcription machinery. Mediator is recruited to promoters by direct interactions with regulatory proteins and serves as a scaffold for the assembly of a functional preinitiation complex with RNA polymerase II and the general transcription factors. The chain is Mediator of RNA polymerase II transcription subunit 8 (med8) from Aspergillus niger (strain ATCC MYA-4892 / CBS 513.88 / FGSC A1513).